Here is a 249-residue protein sequence, read N- to C-terminus: 2,3-bisphosphoglycerate-dependent phosphoglycerate mutase (249 aa).

Residues 8–15 (RHGESTWN), 21–22 (TG), arginine 60, 87–90 (ERHY), lysine 98, 114–115 (RR), and 183–184 (GN) contribute to the substrate site. Histidine 9 functions as the Tele-phosphohistidine intermediate in the catalytic mechanism. The active-site Proton donor/acceptor is glutamate 87.

Belongs to the phosphoglycerate mutase family. BPG-dependent PGAM subfamily. Homodimer.

It catalyses the reaction (2R)-2-phosphoglycerate = (2R)-3-phosphoglycerate. It functions in the pathway carbohydrate degradation; glycolysis; pyruvate from D-glyceraldehyde 3-phosphate: step 3/5. Functionally, catalyzes the interconversion of 2-phosphoglycerate and 3-phosphoglycerate. The sequence is that of 2,3-bisphosphoglycerate-dependent phosphoglycerate mutase from Aromatoleum aromaticum (strain DSM 19018 / LMG 30748 / EbN1) (Azoarcus sp. (strain EbN1)).